The chain runs to 568 residues: Chaperonin homolog Hsp-60, mitochondrial (568 aa).

Belongs to the chaperonin (HSP60) family.

Its subcellular location is the mitochondrion matrix. Its function is as follows. Implicated in mitochondrial protein import and macromolecular assembly. May facilitate the correct folding of imported proteins. May also prevent misfolding and promote the refolding and proper assembly of unfolded polypeptides generated under stress conditions in the mitochondrial matrix. In Caenorhabditis elegans, this protein is Chaperonin homolog Hsp-60, mitochondrial (hsp-60).